A 749-amino-acid polypeptide reads, in one-letter code: 5-methyltetrahydropteroyltriglutamate--homocysteine methyltransferase (749 aa).

5-methyltetrahydropteroyltri-L-glutamate is bound by residues 15-18 and Lys-114; that span reads RELK. L-homocysteine contacts are provided by residues 425 to 427 and Glu-478; that span reads IGS. L-methionine-binding positions include 425 to 427 and Glu-478; that span reads IGS. Trp-555 contributes to the 5-methyltetrahydropteroyltri-L-glutamate binding site. Asp-593 provides a ligand contact to L-homocysteine. An L-methionine-binding site is contributed by Asp-593. A 5-methyltetrahydropteroyltri-L-glutamate-binding site is contributed by Glu-599. 3 residues coordinate Zn(2+): His-636, Cys-638, and Glu-660. His-689 (proton donor) is an active-site residue. Cys-721 lines the Zn(2+) pocket.

Belongs to the vitamin-B12 independent methionine synthase family. Zn(2+) serves as cofactor.

The catalysed reaction is 5-methyltetrahydropteroyltri-L-glutamate + L-homocysteine = tetrahydropteroyltri-L-glutamate + L-methionine. It functions in the pathway amino-acid biosynthesis; L-methionine biosynthesis via de novo pathway; L-methionine from L-homocysteine (MetE route): step 1/1. In terms of biological role, catalyzes the transfer of a methyl group from 5-methyltetrahydrofolate to homocysteine resulting in methionine formation. This is 5-methyltetrahydropteroyltriglutamate--homocysteine methyltransferase from Streptococcus suis (strain 05ZYH33).